The primary structure comprises 305 residues: Coenzyme PQQ synthesis protein B (305 aa).

It belongs to the PqqB family.

It functions in the pathway cofactor biosynthesis; pyrroloquinoline quinone biosynthesis. In terms of biological role, may be involved in the transport of PQQ or its precursor to the periplasm. In Cupriavidus necator (strain ATCC 17699 / DSM 428 / KCTC 22496 / NCIMB 10442 / H16 / Stanier 337) (Ralstonia eutropha), this protein is Coenzyme PQQ synthesis protein B.